The sequence spans 510 residues: Light-independent protochlorophyllide reductase subunit B (510 aa).

D36 contacts [4Fe-4S] cluster. The Proton donor role is filled by D296. 431–432 serves as a coordination point for substrate; sequence GM.

Belongs to the ChlB/BchB/BchZ family. In terms of assembly, protochlorophyllide reductase is composed of three subunits; ChlL, ChlN and ChlB. Forms a heterotetramer of two ChlB and two ChlN subunits. The cofactor is [4Fe-4S] cluster.

It catalyses the reaction chlorophyllide a + oxidized 2[4Fe-4S]-[ferredoxin] + 2 ADP + 2 phosphate = protochlorophyllide a + reduced 2[4Fe-4S]-[ferredoxin] + 2 ATP + 2 H2O. The protein operates within porphyrin-containing compound metabolism; chlorophyll biosynthesis (light-independent). Component of the dark-operative protochlorophyllide reductase (DPOR) that uses Mg-ATP and reduced ferredoxin to reduce ring D of protochlorophyllide (Pchlide) to form chlorophyllide a (Chlide). This reaction is light-independent. The NB-protein (ChlN-ChlB) is the catalytic component of the complex. This chain is Light-independent protochlorophyllide reductase subunit B, found in Synechococcus sp. (strain JA-2-3B'a(2-13)) (Cyanobacteria bacterium Yellowstone B-Prime).